The sequence spans 961 residues: Leucine--tRNA ligase (961 aa).

The 'HIGH' region motif lies at 41 to 51; sequence PYLNGNLHAGH. Residues 632–636 carry the 'KMSKS' region motif; sequence KMSKS. K635 is an ATP binding site.

This sequence belongs to the class-I aminoacyl-tRNA synthetase family.

The protein localises to the cytoplasm. The catalysed reaction is tRNA(Leu) + L-leucine + ATP = L-leucyl-tRNA(Leu) + AMP + diphosphate. This is Leucine--tRNA ligase from Methanosarcina acetivorans (strain ATCC 35395 / DSM 2834 / JCM 12185 / C2A).